A 390-amino-acid chain; its full sequence is Guanine nucleotide exchange factor for Rab-3A (390 aa).

Residues M1–D60 form a disordered region. The segment covering P40–Q58 has biased composition (low complexity). A coiled-coil region spans residues E73 to V161. Residues P166–S194 are disordered. Phosphoserine occurs at positions 168 and 179. Basic residues predominate over residues G184–S194.

This sequence belongs to the SEC2 family. In terms of assembly, interacts with RAB3A and IHPK1 through the coiled-coil domain. This interaction is competitive. IHPK1 kinase activity is not required for this interaction.

Functionally, guanine nucleotide exchange factor (GEF) which may activate RAB3A, a GTPase that regulates synaptic vesicle exocytosis. Promotes the exchange of GDP to GTP, converting inactive GDP-bound Rab proteins into their active GTP-bound form. May also activate RAB8A and RAB8B. This Bos taurus (Bovine) protein is Guanine nucleotide exchange factor for Rab-3A (RAB3IL1).